Reading from the N-terminus, the 161-residue chain is uncharacterized protein (161 aa).

Residues 72–134 (CAICLDNLQN…EAQQTCPTCR (63 aa)) form an RING-type zinc finger. A disordered region spans residues 140-161 (DKEVEEEERQRNLEELHDSMYG).

This is an uncharacterized protein from Caenorhabditis elegans.